The sequence spans 143 residues: Ribosome maturation factor RimP (143 aa).

Belongs to the RimP family.

The protein resides in the cytoplasm. Its function is as follows. Required for maturation of 30S ribosomal subunits. In Borrelia recurrentis (strain A1), this protein is Ribosome maturation factor RimP.